The following is a 129-amino-acid chain: Small ribosomal subunit protein uS12 (129 aa).

The residue at position 89 (Asp89) is a 3-methylthioaspartic acid. The disordered stretch occupies residues 110–129 (RKQGRSRYGAPRKQVVATKK).

It belongs to the universal ribosomal protein uS12 family. As to quaternary structure, part of the 30S ribosomal subunit. Contacts proteins S8 and S17. May interact with IF1 in the 30S initiation complex.

With S4 and S5 plays an important role in translational accuracy. Functionally, interacts with and stabilizes bases of the 16S rRNA that are involved in tRNA selection in the A site and with the mRNA backbone. Located at the interface of the 30S and 50S subunits, it traverses the body of the 30S subunit contacting proteins on the other side and probably holding the rRNA structure together. The combined cluster of proteins S8, S12 and S17 appears to hold together the shoulder and platform of the 30S subunit. The sequence is that of Small ribosomal subunit protein uS12 from Rickettsia bellii (strain OSU 85-389).